Reading from the N-terminus, the 405-residue chain is MIYNDRLGEVMDLNTLIKIIEKVGRIEIEDIKITADELIINIPSAPPIVIPQTPSIKEKLAEEGIIEIKDVPELDWEPPVEKYPGYIREVQFGKPKSEGGRGKVVKIGGQRALYRFEEPQPNPPVVTFDIFDIPMPGLPKPIRQFFQDVMEDPCEWAKKCVKEFGADMITIHHISTDPKIKDKSPKEAAKLMEDLLQAVDVPFVIGGSGNPQKDPLVLEACAEVAEGDRCLLASANLELDYKKIVDAAMKYDHNVLAWSIMDPNMARDLNRKLVEAGLDPNRIVMDPTTCALGYGIEFSINAMVRLRLNGLKGDELVNMPMSSGTTNAIGAREAWMNNPEWGPREYRLPLWEITTGITMMMCGVDLFMMLNPISVKTLKEIGKTLTTKPGEVKLNTNNYEWIVSP.

Belongs to the CdhD family. In terms of assembly, heterodimer of delta and gamma chains. The ACDS complex is made up of alpha, epsilon, beta, gamma and delta chains with a probable stoichiometry of (alpha(2)epsilon(2))(4)-beta(8)-(gamma(1)delta(1))(8).

Its function is as follows. Part of a complex that catalyzes the reversible cleavage of acetyl-CoA, allowing autotrophic growth from CO(2). Probably maintains the overall quaternary structure of the ACDS complex. The polypeptide is Acetyl-CoA decarbonylase/synthase complex subunit delta (Methanocaldococcus jannaschii (strain ATCC 43067 / DSM 2661 / JAL-1 / JCM 10045 / NBRC 100440) (Methanococcus jannaschii)).